A 620-amino-acid polypeptide reads, in one-letter code: Tyrosine-protein kinase ITK/TSK (620 aa).

In terms of domain architecture, PH spans 4-111; that stretch reads FILLEEQLIK…WVLALKEETR (108 aa). The Btk-type zinc finger occupies 113–149; it reads NNSLVPKYHPNFWMDGKWRCCSQLEKLATGCAQYDPT. Zn(2+) contacts are provided by H121, C132, C133, and C143. Positions 171-231 constitute an SH3 domain; it reads PEETVVIALY…PSSYLVEKSP (61 aa). Y180 bears the Phosphotyrosine; by autocatalysis mark. One can recognise an SH2 domain in the interval 239 to 338; sequence WYNKSISRDK…GLVTRLRYPV (100 aa). The region spanning 363 to 615 is the Protein kinase domain; the sequence is LTFVQEIGSG…SRLLRQLAEI (253 aa). ATP contacts are provided by residues 369-377 and K391; that span reads IGSGQFGLV. D482 functions as the Proton acceptor in the catalytic mechanism. Position 512 is a phosphotyrosine; by LCK (Y512). Residue S565 is modified to Phosphoserine.

The protein belongs to the protein kinase superfamily. Tyr protein kinase family. TEC subfamily. As to quaternary structure, homooligomerizes; this association negatively regulates kinase activity. Interacts with PPIA/CYPA; this interaction regulates TCR signal strength via a proline-directed conformational switch in ITK. Interacts with THEMIS. Interacts with FASLG. Interacts with VAV1; this interaction is important for VAV1 localization and TCR-induced actin polarization. Interacts with TBX21. It depends on Zn(2+) as a cofactor. Phosphorylated at Tyr-512 in the activation loop of the kinase domain by LCK. Subsequent autophosphorylation at Tyr-180 leads to the kinase activation. The autophosphorylated Tyr-180 lies within the substrate binding sequence of the SH3 domain. Post-translationally, ubiquitinated. In terms of tissue distribution, T-cell lines and natural killer cell lines.

The protein resides in the cytoplasm. It localises to the nucleus. The enzyme catalyses L-tyrosyl-[protein] + ATP = O-phospho-L-tyrosyl-[protein] + ADP + H(+). Its function is as follows. Tyrosine kinase that plays an essential role in regulation of the adaptive immune response. Regulates the development, function and differentiation of conventional T-cells and nonconventional NKT-cells. When antigen presenting cells (APC) activate T-cell receptor (TCR), a series of phosphorylation lead to the recruitment of ITK to the cell membrane, in the vicinity of the stimulated TCR receptor, where it is phosphorylated by LCK. Phosphorylation leads to ITK autophosphorylation and full activation. Once activated, phosphorylates PLCG1, leading to the activation of this lipase and subsequent cleavage of its substrates. In turn, the endoplasmic reticulum releases calcium in the cytoplasm and the nuclear activator of activated T-cells (NFAT) translocates into the nucleus to perform its transcriptional duty. Phosphorylates 2 essential adapter proteins: the linker for activation of T-cells/LAT protein and LCP2. Then, a large number of signaling molecules such as VAV1 are recruited and ultimately lead to lymphokine production, T-cell proliferation and differentiation. Required for TCR-mediated calcium response in gamma-delta T-cells, may also be involved in the modulation of the transcriptomic signature in the Vgamma2-positive subset of immature gamma-delta T-cells. Phosphorylates TBX21 at 'Tyr-530' and mediates its interaction with GATA3. This is Tyrosine-protein kinase ITK/TSK (ITK) from Homo sapiens (Human).